Reading from the N-terminus, the 415-residue chain is Metal tolerance protein 5 (415 aa).

At 1 to 124 the chain is on the cytoplasmic side; sequence MAAAVAGGGE…REKVARSETL (124 aa). The chain crosses the membrane as a helical span at residues 125–145; the sequence is AIRLSNIANMVLFAAKVYASV. Residues 146-150 lie on the Vacuolar side of the membrane; the sequence is RSGSL. A helical transmembrane segment spans residues 151–171; that stretch reads AIIASTLDSLLDLLSGFILWF. Residues 172–192 are Cytoplasmic-facing; the sequence is TAFSMQTPNPYRYPIGKKRMQ. The helical transmembrane segment at 193–213 threads the bilayer; the sequence is PLGILVFASVMATLGLQIILE. Residues 214–232 are Vacuolar-facing; it reads SVRSLLSDGDEFSLTKEQE. A helical membrane pass occupies residues 233 to 253; the sequence is KWVVDIMLAVTLVKLALVLYC. The Cytoplasmic segment spans residues 254–268; that stretch reads RTFTNEIVKAYAQDH. The helical transmembrane segment at 269–291 threads the bilayer; the sequence is FFDVITNMIGLVAALLATYIEGW. The Vacuolar portion of the chain corresponds to 292–293; that stretch reads ID. Residues 294–313 traverse the membrane as a helical segment; that stretch reads PVGAIILAIYTIRTWSMTVL. The Cytoplasmic portion of the chain corresponds to 314-415; it reads ENVHSLVGQS…RPEHALSHEK (102 aa).

The protein belongs to the cation diffusion facilitator (CDF) transporter (TC 2.A.4) family. SLC30A subfamily.

It is found in the vacuole membrane. Functionally, involved in sequestration of excess metal in the cytoplasm into vacuoles to maintain metal homeostasis. This Oryza sativa subsp. japonica (Rice) protein is Metal tolerance protein 5 (MTP5).